Consider the following 399-residue polypeptide: Elongation factor Tu (399 aa).

The tr-type G domain occupies 10-209 (KPHVNIGTIG…AVDEYIPEPT (200 aa)). Residues 19-26 (GHVDHGKT) form a G1 region. GTP is bound at residue 19–26 (GHVDHGKT). T26 is a binding site for Mg(2+). The segment at 60–64 (GITIA) is G2. Positions 81-84 (DCPG) are G3. GTP contacts are provided by residues 81 to 85 (DCPGH) and 136 to 139 (NKED). Residues 136-139 (NKED) are G4. Residues 174 to 176 (SAK) are G5.

Belongs to the TRAFAC class translation factor GTPase superfamily. Classic translation factor GTPase family. EF-Tu/EF-1A subfamily. As to quaternary structure, monomer.

The protein resides in the cytoplasm. The catalysed reaction is GTP + H2O = GDP + phosphate + H(+). Its function is as follows. GTP hydrolase that promotes the GTP-dependent binding of aminoacyl-tRNA to the A-site of ribosomes during protein biosynthesis. The chain is Elongation factor Tu from Sulfurimonas denitrificans (strain ATCC 33889 / DSM 1251) (Thiomicrospira denitrificans (strain ATCC 33889 / DSM 1251)).